The chain runs to 393 residues: Probable tRNA sulfurtransferase (393 aa).

Residues 61 to 168 (DEVIESLTRV…GDVINIYSIE (108 aa)) form the THUMP domain. ATP contacts are provided by residues 186–187 (LL), 211–212 (YF), R268, G290, and Q299.

The protein belongs to the ThiI family.

It is found in the cytoplasm. The catalysed reaction is [ThiI sulfur-carrier protein]-S-sulfanyl-L-cysteine + a uridine in tRNA + 2 reduced [2Fe-2S]-[ferredoxin] + ATP + H(+) = [ThiI sulfur-carrier protein]-L-cysteine + a 4-thiouridine in tRNA + 2 oxidized [2Fe-2S]-[ferredoxin] + AMP + diphosphate. It catalyses the reaction [ThiS sulfur-carrier protein]-C-terminal Gly-Gly-AMP + S-sulfanyl-L-cysteinyl-[cysteine desulfurase] + AH2 = [ThiS sulfur-carrier protein]-C-terminal-Gly-aminoethanethioate + L-cysteinyl-[cysteine desulfurase] + A + AMP + 2 H(+). It participates in cofactor biosynthesis; thiamine diphosphate biosynthesis. In terms of biological role, catalyzes the ATP-dependent transfer of a sulfur to tRNA to produce 4-thiouridine in position 8 of tRNAs, which functions as a near-UV photosensor. Also catalyzes the transfer of sulfur to the sulfur carrier protein ThiS, forming ThiS-thiocarboxylate. This is a step in the synthesis of thiazole, in the thiamine biosynthesis pathway. The sulfur is donated as persulfide by IscS. This chain is Probable tRNA sulfurtransferase, found in Lachnospira eligens (strain ATCC 27750 / DSM 3376 / VPI C15-48 / C15-B4) (Eubacterium eligens).